A 413-amino-acid polypeptide reads, in one-letter code: Imidazolonepropionase (413 aa).

2 residues coordinate Fe(3+): His70 and His72. The Zn(2+) site is built by His70 and His72. Residues Arg79, Tyr142, and His175 each contribute to the 4-imidazolone-5-propanoate site. Tyr142 provides a ligand contact to N-formimidoyl-L-glutamate. His240 is a Fe(3+) binding site. His240 is a Zn(2+) binding site. Glu243 serves as a coordination point for 4-imidazolone-5-propanoate. Residue Asp315 participates in Fe(3+) binding. Asp315 provides a ligand contact to Zn(2+). Asn317 and Gly319 together coordinate N-formimidoyl-L-glutamate. Ser320 is a 4-imidazolone-5-propanoate binding site.

This sequence belongs to the metallo-dependent hydrolases superfamily. HutI family. Zn(2+) is required as a cofactor. The cofactor is Fe(3+).

It localises to the cytoplasm. It carries out the reaction 4-imidazolone-5-propanoate + H2O = N-formimidoyl-L-glutamate. It participates in amino-acid degradation; L-histidine degradation into L-glutamate; N-formimidoyl-L-glutamate from L-histidine: step 3/3. Functionally, catalyzes the hydrolytic cleavage of the carbon-nitrogen bond in imidazolone-5-propanoate to yield N-formimidoyl-L-glutamate. It is the third step in the universal histidine degradation pathway. In Treponema denticola (strain ATCC 35405 / DSM 14222 / CIP 103919 / JCM 8153 / KCTC 15104), this protein is Imidazolonepropionase.